We begin with the raw amino-acid sequence, 119 residues long: Large ribosomal subunit protein uL18 (119 aa).

This sequence belongs to the universal ribosomal protein uL18 family. Part of the 50S ribosomal subunit; part of the 5S rRNA/L5/L18/L25 subcomplex. Contacts the 5S and 23S rRNAs.

Its function is as follows. This is one of the proteins that bind and probably mediate the attachment of the 5S RNA into the large ribosomal subunit, where it forms part of the central protuberance. In Sorangium cellulosum (strain So ce56) (Polyangium cellulosum (strain So ce56)), this protein is Large ribosomal subunit protein uL18.